The chain runs to 344 residues: Serine/threonine-protein kinase ppk13 (344 aa).

ATP is bound by residues 38–46 (LGEGGFAFV) and Lys61. Residues 76 to 344 (MKEADYHRKF…LSKIDLQINQ (269 aa)) form the Protein kinase domain. Residue His192 is the Proton acceptor of the active site.

This sequence belongs to the protein kinase superfamily. Ser/Thr protein kinase family.

The protein resides in the endoplasmic reticulum. It localises to the golgi apparatus. It catalyses the reaction L-seryl-[protein] + ATP = O-phospho-L-seryl-[protein] + ADP + H(+). The catalysed reaction is L-threonyl-[protein] + ATP = O-phospho-L-threonyl-[protein] + ADP + H(+). The polypeptide is Serine/threonine-protein kinase ppk13 (ppk13) (Schizosaccharomyces pombe (strain 972 / ATCC 24843) (Fission yeast)).